The chain runs to 366 residues: Putative actin-9 (366 aa).

It belongs to the actin family. Polymerization of globular actin (G-actin) leads to a structural filament (F-actin) in the form of a two-stranded helix. The binding of profilin to monomeric G-actin cause the sequestration of actin into profilactin complexes, and prevents the polymerization.

It localises to the cytoplasm. The protein localises to the cytoskeleton. In terms of biological role, actins are highly conserved proteins that are involved in various types of cell motility and are ubiquitously expressed in all eukaryotic cells. Essential component of cell cytoskeleton; plays an important role in cytoplasmic streaming, cell shape determination, cell division, organelle movement and extension growth. The chain is Putative actin-9 (ACT9) from Arabidopsis thaliana (Mouse-ear cress).